The chain runs to 311 residues: Geranylgeranyl transferase type-2 subunit alpha (311 aa).

Residues 12–43 (EKAKAQRLKELEKIESYNKLVKSFEELREKQN) are a coiled coil. PFTA repeat units follow at residues 49–82 (ISLS…TETK), 93–126 (NEMK…DNCD), 129–162 (REMK…NIKL), 164–197 (DELK…YKEP), and 206–239 (EEFE…KSIP).

The protein belongs to the protein prenyltransferase subunit alpha family. Heterodimer of an alpha and a beta subunit.

The enzyme catalyses geranylgeranyl diphosphate + L-cysteinyl-[protein] = S-geranylgeranyl-L-cysteinyl-[protein] + diphosphate. Catalyzes the transfer of a geranylgeranyl moiety from geranylgeranyl diphosphate to proteins with a C-terminal sequence motif -XCC or -XCXC, where both cysteines may become modified. The polypeptide is Geranylgeranyl transferase type-2 subunit alpha (rabggta) (Dictyostelium discoideum (Social amoeba)).